A 173-amino-acid chain; its full sequence is Large ribosomal subunit protein uL10 (173 aa).

This sequence belongs to the universal ribosomal protein uL10 family. As to quaternary structure, part of the ribosomal stalk of the 50S ribosomal subunit. The N-terminus interacts with L11 and the large rRNA to form the base of the stalk. The C-terminus forms an elongated spine to which L12 dimers bind in a sequential fashion forming a multimeric L10(L12)X complex.

Functionally, forms part of the ribosomal stalk, playing a central role in the interaction of the ribosome with GTP-bound translation factors. This is Large ribosomal subunit protein uL10 from Thermus thermophilus (strain ATCC BAA-163 / DSM 7039 / HB27).